The chain runs to 178 residues: Ribosome maturation factor RimP (178 aa).

Belongs to the RimP family.

Its subcellular location is the cytoplasm. Functionally, required for maturation of 30S ribosomal subunits. The sequence is that of Ribosome maturation factor RimP from Mycobacterium avium (strain 104).